The primary structure comprises 286 residues: Elongation factor Ts (286 aa).

The tract at residues T79–V82 is involved in Mg(2+) ion dislocation from EF-Tu.

The protein belongs to the EF-Ts family.

The protein resides in the cytoplasm. Functionally, associates with the EF-Tu.GDP complex and induces the exchange of GDP to GTP. It remains bound to the aminoacyl-tRNA.EF-Tu.GTP complex up to the GTP hydrolysis stage on the ribosome. The chain is Elongation factor Ts from Wolbachia sp. subsp. Drosophila simulans (strain wRi).